A 179-amino-acid chain; its full sequence is Large ribosomal subunit protein uL5 (179 aa).

Belongs to the universal ribosomal protein uL5 family. As to quaternary structure, part of the 50S ribosomal subunit; part of the 5S rRNA/L5/L18/L25 subcomplex. Contacts the 5S rRNA and the P site tRNA. Forms a bridge to the 30S subunit in the 70S ribosome.

In terms of biological role, this is one of the proteins that bind and probably mediate the attachment of the 5S RNA into the large ribosomal subunit, where it forms part of the central protuberance. In the 70S ribosome it contacts protein S13 of the 30S subunit (bridge B1b), connecting the 2 subunits; this bridge is implicated in subunit movement. Contacts the P site tRNA; the 5S rRNA and some of its associated proteins might help stabilize positioning of ribosome-bound tRNAs. This Herminiimonas arsenicoxydans protein is Large ribosomal subunit protein uL5.